The primary structure comprises 186 residues: UPF0301 protein NTHI0415 (186 aa).

The protein belongs to the UPF0301 (AlgH) family.

The polypeptide is UPF0301 protein NTHI0415 (Haemophilus influenzae (strain 86-028NP)).